The sequence spans 214 residues: Small ribosomal subunit protein uS4c (214 aa).

2 stretches are compositionally biased toward basic residues: residues 1–14 (MSRYRGPRVKKIKR) and 36–46 (LSRPKPKKKSQ). Residues 1–46 (MSRYRGPRVKKIKRLGSLPGLTTKKPPIVVRDPRKLSRPKPKKKSQ) form a disordered region. The S4 RNA-binding domain maps to 92-153 (MRLDNTLFRL…KEKSKALIQN (62 aa)).

This sequence belongs to the universal ribosomal protein uS4 family. In terms of assembly, part of the 30S ribosomal subunit. Contacts protein S5. The interaction surface between S4 and S5 is involved in control of translational fidelity.

The protein localises to the plastid. It is found in the chloroplast. Its function is as follows. One of the primary rRNA binding proteins, it binds directly to 16S rRNA where it nucleates assembly of the body of the 30S subunit. In terms of biological role, with S5 and S12 plays an important role in translational accuracy. The protein is Small ribosomal subunit protein uS4c (rps4) of Pelargonium hortorum (Common geranium).